Reading from the N-terminus, the 909-residue chain is SCY1-like protein 2 B (909 aa).

Residues 39–343 enclose the Protein kinase domain; the sequence is YELLDQIGSA…ALDFTGSNFF (305 aa). HEAT repeat units lie at residues 311-348, 350-382, 383-401, 402-439, 465-502, 499-537, and 578-617; these read SIPS…SDAR, RALR…DFDS, RVLR…RNLV, LQPI…TASG, VLPL…VVRQ, VVRQ…TLDK, and FTAE…KIEE. Disordered stretches follow at residues 624–772 and 804–909; these read NDSG…VAST and SASL…LDLL. Polar residues-rich tracts occupy residues 638–648, 678–712, 724–747, 804–828, and 835–852; these read NGLQFQSSTQI, PASS…TAPT, RQSS…TSFA, SASL…QDPL, and KQSQ…NNQK.

Belongs to the protein kinase superfamily. Interacts with VTI11, VTI12 and CHC1. Expressed in roots, seedlings, leaves, stems, flowers, and, at low levels, in siliques.

The protein localises to the golgi apparatus membrane. Its subcellular location is the golgi apparatus. The protein resides in the trans-Golgi network membrane. It localises to the prevacuolar compartment membrane. Probably inactive kinase. Component of the AP2-containing clathrin coat that regulates clathrin-dependent trafficking at plasma membrane, TGN and endosomal system. Together with SCYL2B, required for cell growth, plant growth and development. Essential for polarized root hair development probably by mediating the root hair tip localization of cellulose synthase-like D3 (CSLD3). The polypeptide is SCY1-like protein 2 B (Arabidopsis thaliana (Mouse-ear cress)).